We begin with the raw amino-acid sequence, 445 residues long: Argininosuccinate synthase (445 aa).

Residues 17-25 and A43 contribute to the ATP site; that span reads AFSGGLDTS. Y99 serves as a coordination point for L-citrulline. ATP-binding residues include G129 and T131. Positions 131, 135, and 136 each coordinate L-aspartate. Position 135 (N135) interacts with L-citrulline. Residue D136 coordinates ATP. The L-citrulline site is built by R139 and S192. D194 provides a ligand contact to ATP. Residues T201, E203, and E280 each contribute to the L-citrulline site.

This sequence belongs to the argininosuccinate synthase family. Type 2 subfamily. As to quaternary structure, homotetramer.

The protein resides in the cytoplasm. It catalyses the reaction L-citrulline + L-aspartate + ATP = 2-(N(omega)-L-arginino)succinate + AMP + diphosphate + H(+). The protein operates within amino-acid biosynthesis; L-arginine biosynthesis; L-arginine from L-ornithine and carbamoyl phosphate: step 2/3. This Ralstonia pickettii (strain 12J) protein is Argininosuccinate synthase.